The sequence spans 445 residues: Phosphoglucosamine mutase (445 aa).

Serine 102 acts as the Phosphoserine intermediate in catalysis. Serine 102, aspartate 241, aspartate 243, and aspartate 245 together coordinate Mg(2+). Residue serine 102 is modified to Phosphoserine.

This sequence belongs to the phosphohexose mutase family. The cofactor is Mg(2+). Activated by phosphorylation.

It carries out the reaction alpha-D-glucosamine 1-phosphate = D-glucosamine 6-phosphate. In terms of biological role, catalyzes the conversion of glucosamine-6-phosphate to glucosamine-1-phosphate. This is Phosphoglucosamine mutase from Shewanella piezotolerans (strain WP3 / JCM 13877).